Consider the following 154-residue polypeptide: Ribosome maturation factor RimP (154 aa).

It belongs to the RimP family.

It localises to the cytoplasm. Its function is as follows. Required for maturation of 30S ribosomal subunits. This is Ribosome maturation factor RimP from Finegoldia magna (strain ATCC 29328 / DSM 20472 / WAL 2508) (Peptostreptococcus magnus).